We begin with the raw amino-acid sequence, 150 residues long: UPF0260 protein VIBHAR_03078 (150 aa).

This sequence belongs to the UPF0260 family.

This is UPF0260 protein VIBHAR_03078 from Vibrio campbellii (strain ATCC BAA-1116).